We begin with the raw amino-acid sequence, 652 residues long: Phosphatidylinositol-binding clathrin assembly protein (652 aa).

Serine 2 is subject to N-acetylserine. In terms of domain architecture, ENTH spans 14–145; that stretch reads QHSVTGSAVS…VSYRQVAFDF (132 aa). A phosphoserine mark is found at serine 16 and serine 20. An interaction with PIMREG region spans residues 221–294; that stretch reads KYFDMKKNQC…LEGKKIKDST (74 aa). A Glycyl lysine isopeptide (Lys-Gly) (interchain with G-Cter in SUMO2) cross-link involves residue lysine 238. Phosphoserine is present on residues serine 303 and serine 315. Residues 559-580 form a disordered region; it reads KNDVNWSQPGEKKLTGGSNWQP.

This sequence belongs to the PICALM/SNAP91 family. As to quaternary structure, binds to clathrin; involves primarily the C-terminal sequences, but the full-length protein is required for full binding capacity. Binds phosphatidylinositol 4,5- bisphosphate. Interacts with PIMREG; this interaction may change the subcellular location into the nucleus. Interacts with AP2A1 (via its alpha-appendage domain). Interacts (via N-terminus) with VAMP2; VAMP3; VAMP7 and VAMP8 (Via N-terminus). Interacts with LC3/MAP1LC3A. As to expression, expressed in all tissues examined.

It localises to the cell membrane. It is found in the membrane. Its subcellular location is the clathrin-coated pit. The protein resides in the golgi apparatus. The protein localises to the cytoplasmic vesicle. It localises to the clathrin-coated vesicle. It is found in the nucleus. Functionally, cytoplasmic adapter protein that plays a critical role in clathrin-mediated endocytosis which is important in processes such as internalization of cell receptors, synaptic transmission or removal of apoptotic cells. Recruits AP-2 and attaches clathrin triskelions to the cytoplasmic side of plasma membrane leading to clathrin-coated vesicles (CCVs) assembly. Furthermore, regulates clathrin-coated vesicle size and maturation by directly sensing and driving membrane curvature. In addition to binding to clathrin, mediates the endocytosis of small R-SNARES (Soluble NSF Attachment Protein REceptors) between plasma membranes and endosomes including VAMP2, VAMP3, VAMP4, VAMP7 or VAMP8. In turn, PICALM-dependent SNARE endocytosis is required for the formation and maturation of autophagic precursors. Modulates thereby autophagy and the turnover of autophagy substrates such as MAPT/TAU or amyloid precursor protein cleaved C-terminal fragment (APP-CTF). The protein is Phosphatidylinositol-binding clathrin assembly protein (PICALM) of Homo sapiens (Human).